The chain runs to 82 residues: MEVRSLNLCFLLVLVLLMSPAPTAVAFSPEDCLDDVGWILICTKPTCKFSCWTSRSVNKGRKMQDYWCSDSNTCHCVFCTGD.

The first 26 residues, 1 to 26 (MEVRSLNLCFLLVLVLLMSPAPTAVA), serve as a signal peptide directing secretion. Disulfide bonds link cysteine 32/cysteine 79, cysteine 42/cysteine 68, cysteine 47/cysteine 74, and cysteine 51/cysteine 76.

This sequence belongs to the DEFL family.

It localises to the secreted. The protein is Putative defensin-like protein 134 of Arabidopsis thaliana (Mouse-ear cress).